We begin with the raw amino-acid sequence, 93 residues long: Putative pterin-4-alpha-carbinolamine dehydratase (93 aa).

It belongs to the pterin-4-alpha-carbinolamine dehydratase family.

It carries out the reaction (4aS,6R)-4a-hydroxy-L-erythro-5,6,7,8-tetrahydrobiopterin = (6R)-L-erythro-6,7-dihydrobiopterin + H2O. The protein is Putative pterin-4-alpha-carbinolamine dehydratase of Roseiflexus castenholzii (strain DSM 13941 / HLO8).